A 39-amino-acid polypeptide reads, in one-letter code: Cytochrome b6-f complex subunit 5 (39 aa).

A helical membrane pass occupies residues 5 to 25 (LLCGIVLGLVPITLLGLFVSA).

Belongs to the PetG family. As to quaternary structure, the 4 large subunits of the cytochrome b6-f complex are cytochrome b6, subunit IV (17 kDa polypeptide, PetD), cytochrome f and the Rieske protein, while the 4 small subunits are PetG, PetL, PetM and PetN. The complex functions as a dimer.

Its subcellular location is the cellular thylakoid membrane. Component of the cytochrome b6-f complex, which mediates electron transfer between photosystem II (PSII) and photosystem I (PSI), cyclic electron flow around PSI, and state transitions. PetG is required for either the stability or assembly of the cytochrome b6-f complex. The sequence is that of Cytochrome b6-f complex subunit 5 from Prochlorococcus marinus (strain MIT 9301).